The sequence spans 544 residues: Chaperonin GroEL (544 aa).

Residues 29-32 (TLGP), 86-90 (DGTTT), Gly-413, 476-478 (NAA), and Asp-492 each bind ATP.

It belongs to the chaperonin (HSP60) family. As to quaternary structure, forms a cylinder of 14 subunits composed of two heptameric rings stacked back-to-back. Interacts with the co-chaperonin GroES.

It is found in the cytoplasm. It carries out the reaction ATP + H2O + a folded polypeptide = ADP + phosphate + an unfolded polypeptide.. Together with its co-chaperonin GroES, plays an essential role in assisting protein folding. The GroEL-GroES system forms a nano-cage that allows encapsulation of the non-native substrate proteins and provides a physical environment optimized to promote and accelerate protein folding. This is Chaperonin GroEL from Halalkalibacterium halodurans (strain ATCC BAA-125 / DSM 18197 / FERM 7344 / JCM 9153 / C-125) (Bacillus halodurans).